Here is a 217-residue protein sequence, read N- to C-terminus: MITVALAKGALLRESVERFQAAGLDFSAVLDPDNRQLMVPSTCGRARALLVRNGDVPVYVAYGQAQLGIVGYDVLREHQMPVAHLVDLGFGGCRMSVAVKNTSGYTRATDLPPHCRVASKFTRCARQYFDSIDLPVELVHLTGSVELGPITGIAEAIVDLVATGRTLRDNGLVAIEDLFHTTARLVGHPLALRLDQGELQSIIDVMQRSPHDAVGVN.

Belongs to the ATP phosphoribosyltransferase family. Short subfamily. In terms of assembly, heteromultimer composed of HisG and HisZ subunits.

It is found in the cytoplasm. The catalysed reaction is 1-(5-phospho-beta-D-ribosyl)-ATP + diphosphate = 5-phospho-alpha-D-ribose 1-diphosphate + ATP. It functions in the pathway amino-acid biosynthesis; L-histidine biosynthesis; L-histidine from 5-phospho-alpha-D-ribose 1-diphosphate: step 1/9. In terms of biological role, catalyzes the condensation of ATP and 5-phosphoribose 1-diphosphate to form N'-(5'-phosphoribosyl)-ATP (PR-ATP). Has a crucial role in the pathway because the rate of histidine biosynthesis seems to be controlled primarily by regulation of HisG enzymatic activity. This chain is ATP phosphoribosyltransferase, found in Synechococcus sp. (strain WH7803).